A 248-amino-acid polypeptide reads, in one-letter code: Large ribosomal subunit protein uL30 (248 aa).

M1 carries the post-translational modification N-acetylmethionine. Repeat copies occupy residues 7-18 (KKKKVPAVPETL), 19-30 (KKKRKNFAELKI), 31-42 (KRLRKKFAQKML), and 43-54 (RKARRKLIYEKA). The tract at residues 7–54 (KKKKVPAVPETLKKKRKNFAELKIKRLRKKFAQKMLRKARRKLIYEKA) is 4 X 12 AA tandem repeats. At T17 the chain carries Phosphothreonine. The residue at position 124 (K124) is an N6-acetyllysine. K127 carries the post-translational modification N6-succinyllysine. Y139 is subject to Phosphotyrosine.

The protein belongs to the universal ribosomal protein uL30 family. As to quaternary structure, component of the large ribosomal subunit. Homodimer. Interacts with DHX33.

The protein resides in the cytoplasm. In terms of biological role, component of the large ribosomal subunit. The ribosome is a large ribonucleoprotein complex responsible for the synthesis of proteins in the cell. Binds to G-rich structures in 28S rRNA and in mRNAs. Plays a regulatory role in the translation apparatus; inhibits cell-free translation of mRNAs. The protein is Large ribosomal subunit protein uL30 (RPL7) of Bos taurus (Bovine).